The primary structure comprises 158 residues: Acireductone dioxygenase (158 aa).

Fe(2+) contacts are provided by His-81, His-83, Glu-87, and His-126. Positions 81, 83, 87, and 126 each coordinate Ni(2+).

The protein belongs to the acireductone dioxygenase (ARD) family. Fe(2+) is required as a cofactor. It depends on Ni(2+) as a cofactor.

It is found in the cytoplasm. Its subcellular location is the nucleus. The catalysed reaction is 1,2-dihydroxy-5-(methylsulfanyl)pent-1-en-3-one + O2 = 4-methylsulfanyl-2-oxobutanoate + formate + 2 H(+). It catalyses the reaction 1,2-dihydroxy-5-(methylsulfanyl)pent-1-en-3-one + O2 = 3-(methylsulfanyl)propanoate + CO + formate + 2 H(+). It participates in amino-acid biosynthesis; L-methionine biosynthesis via salvage pathway; L-methionine from S-methyl-5-thio-alpha-D-ribose 1-phosphate: step 5/6. Catalyzes 2 different reactions between oxygen and the acireductone 1,2-dihydroxy-3-keto-5-methylthiopentene (DHK-MTPene) depending upon the metal bound in the active site. Fe-containing acireductone dioxygenase (Fe-ARD) produces formate and 2-keto-4-methylthiobutyrate (KMTB), the alpha-ketoacid precursor of methionine in the methionine recycle pathway. Ni-containing acireductone dioxygenase (Ni-ARD) produces methylthiopropionate, carbon monoxide and formate, and does not lie on the methionine recycle pathway. This Metarhizium robertsii (strain ARSEF 23 / ATCC MYA-3075) (Metarhizium anisopliae (strain ARSEF 23)) protein is Acireductone dioxygenase.